The chain runs to 310 residues: D-erythrulose 1-phosphate 3-epimerase (310 aa).

The enzyme catalyses D-erythrulose 1-phosphate = L-erythrulose 1-phosphate. It functions in the pathway carbohydrate metabolism; erythritol degradation. In terms of biological role, catalyzes the racemization of D-erythrulose 1-phosphate to L-erythrulose 1-phosphate. This Brucella abortus (strain 2308) protein is D-erythrulose 1-phosphate 3-epimerase.